Reading from the N-terminus, the 676-residue chain is Heat shock cognate HSP70 protein (676 aa).

The segment at 613–676 (SARREGKDGW…RIEAINANTE (64 aa)) is disordered. Positions 630 to 646 (GSGDDNDGDDNSDEEDE) are enriched in acidic residues.

Belongs to the heat shock protein 70 family.

This Trypanosoma brucei brucei protein is Heat shock cognate HSP70 protein.